The chain runs to 3080 residues: Protein PIEZO homolog (3080 aa).

6 consecutive transmembrane segments (helical) span residues 28–48 (YIYF…SLIL), 57–77 (PIIT…VNVV), 86–106 (LSVN…WIVF), 113–133 (VIVF…LVYP), 204–224 (YPSI…LLLA), and 232–252 (VMLK…LFVY). A glycan (N-linked (GlcNAc...) asparagine) is linked at Asn276. A helical transmembrane segment spans residues 285-305 (WPLVIGYITVLLLYISTCILF). Residues Asn312 and Asn339 are each glycosylated (N-linked (GlcNAc...) asparagine). A run of 2 helical transmembrane segments spans residues 362 to 382 (ILVV…LASG) and 396 to 416 (VIYI…IFNI). N-linked (GlcNAc...) asparagine glycosylation is present at Asn434. The chain crosses the membrane as a helical span at residues 438 to 458 (WLYIGVQIVVSLTLSLYCFYS). A disordered region spans residues 469 to 548 (KKDQQSQQSQ…GGGIIRPRKP (80 aa)). Positions 473 to 505 (QSQQSQPQPQQQQQQQQSSQNNQIQQSPLQYQQ) are enriched in low complexity. Residues 512–532 (ISNKSLPSSPMSTKSTTVHIQ) show a composition bias toward polar residues. 3 N-linked (GlcNAc...) asparagine glycosylation sites follow: Asn514, Asn567, and Asn606. 3 helical membrane-spanning segments follow: residues 672 to 692 (GLTS…VFVI), 700 to 720 (FWMC…IWQL), and 740 to 760 (YGSP…FSII). N-linked (GlcNAc...) asparagine glycosylation is present at Asn795. The next 3 helical transmembrane spans lie at 827 to 847 (FCYL…INIV), 849 to 869 (MATV…SIHI), and 872 to 892 (FWII…IMQF). Asn918 carries N-linked (GlcNAc...) asparagine glycosylation. A helical transmembrane segment spans residues 928 to 948 (LFGCSSILVVCVFQLTVFFSI). Asn992 carries an N-linked (GlcNAc...) asparagine glycan. 2 helical membrane-spanning segments follow: residues 1036 to 1056 (FAIS…MIVI) and 1067 to 1087 (IGSF…AALL). The N-linked (GlcNAc...) asparagine glycan is linked to Asn1109. Residues 1158 to 1185 (QQQRKLEEHEEEYEEEEDQFGNKKNNDK) are disordered. Acidic residues predominate over residues 1166–1176 (HEEEYEEEEDQ). 3 N-linked (GlcNAc...) asparagine glycosylation sites follow: Asn1191, Asn1240, and Asn1251. The segment at 1199–1253 (DDGNNNNNNNNNNNNNNNNNNNNNNNNNNNNNNNNNNNNNNNQSNNENNENNNNS) is disordered. Over residues 1202–1252 (NNNNNNNNNNNNNNNNNNNNNNNNNNNNNNNNNNNNNNNQSNNENNENNNN) the composition is skewed to low complexity. A run of 3 helical transmembrane segments spans residues 1281 to 1301 (VLAF…LIII), 1316 to 1336 (IYVS…ILVV), and 1360 to 1380 (LLLL…VLFF). Asn1424 and Asn1440 each carry an N-linked (GlcNAc...) asparagine glycan. The next 2 helical transmembrane spans lie at 1472 to 1492 (VILI…SCFY) and 1519 to 1539 (IYNW…ILYF). Residues Asn1559 and Asn1589 are each glycosylated (N-linked (GlcNAc...) asparagine). A helical membrane pass occupies residues 1619–1639 (IETGPLSISTISDVIIMVLLA). The segment covering 1704–1714 (RINRRKNRHNH) has biased composition (basic residues). The interval 1704–1812 (RINRRKNRHN…NPLSNSSSTV (109 aa)) is disordered. Over residues 1715–1742 (YYNNNPNNNYNNNNNNNNSNSSNSNNNN) the composition is skewed to low complexity. 8 N-linked (GlcNAc...) asparagine glycosylation sites follow: Asn1731, Asn1734, Asn1763, Asn1768, Asn1771, Asn1779, Asn1807, and Asn1864. The span at 1762–1782 (KNTTNQNATNSTYSPFANSTM) shows a compositional bias: polar residues. A compositionally biased stretch (low complexity) spans 1789 to 1812 (NNNNNNNNNNNFNNNPLSNSSSTV). 2 disordered regions span residues 1873 to 1899 (LQQE…SSKE) and 1958 to 2032 (SQLL…TSSS). A compositionally biased stretch (low complexity) spans 1958–2021 (SQLLQQQQQQ…NNNNNNNNNN (64 aa)). An N-linked (GlcNAc...) asparagine glycan is attached at Asn2027. 2 consecutive transmembrane segments (helical) span residues 2078–2098 (IANG…AVFL) and 2112–2132 (FWRF…VFQI). N-linked (GlcNAc...) asparagine glycosylation occurs at Asn2148. Residues 2199-2219 (VFGLYIIDGHFISGAFWDLAI) traverse the membrane as a helical segment. Residues 2277-2367 (LNNSPISLNS…NNNNNNNNNN (91 aa)) form a disordered region. Residue Asn2285 is glycosylated (N-linked (GlcNAc...) asparagine). Residues 2288-2367 (NNNNNNNNNN…NNNNNNNNNN (80 aa)) show a composition bias toward low complexity. The next 2 helical transmembrane spans lie at 2427 to 2447 (IIIY…WLAI) and 2457 to 2477 (YYMP…IFPQ). An N-linked (GlcNAc...) asparagine glycan is attached at Asn2478. The next 4 helical transmembrane spans lie at 2500–2520 (YIVI…IYLY), 2530–2550 (QIVL…DLIV), 2553–2573 (FSFG…IYLY), and 2671–2691 (FVTG…PLII). Asn2762, Asn2790, Asn2837, Asn2840, Asn2848, Asn2858, Asn2908, Asn2913, and Asn2935 each carry an N-linked (GlcNAc...) asparagine glycan. The tract at residues 2835–2863 (QSNNSNNSNNPNENSSSGSDDNNNNSNNN) is disordered. Residues 2836 to 2863 (SNNSNNSNNPNENSSSGSDDNNNNSNNN) show a composition bias toward low complexity. A helical transmembrane segment spans residues 2955 to 2975 (ITSTLVSAGIIGLYVSVVLSV). Positions 3054–3080 (PTINSTLNNQNNQNNNNNNNNNHEKIN) are disordered. An N-linked (GlcNAc...) asparagine glycan is attached at Asn3057. Over residues 3061 to 3074 (NNQNNQNNNNNNNN) the composition is skewed to low complexity.

The protein belongs to the PIEZO (TC 1.A.75) family.

It localises to the membrane. The sequence is that of Protein PIEZO homolog from Dictyostelium discoideum (Social amoeba).